A 192-amino-acid polypeptide reads, in one-letter code: Ras-like GTP-binding protein Rho1 (192 aa).

A GTP-binding site is contributed by Gly12–Thr19. Positions Tyr34–Tyr42 match the Effector region motif. GTP-binding positions include Asp59 to Gln63 and Asn117 to Asp120. Cys189 is subject to Cysteine methyl ester. Cys189 carries the S-geranylgeranyl cysteine lipid modification. A propeptide spans Leu190–Leu192 (removed in mature form).

It belongs to the small GTPase superfamily. Rho family. In terms of assembly, interacts with capu. Interacts (via REM repeats) with Pkn (via N-terminus). Interacts (via N-terminus) with wash (via N-terminus). May interact with dia/diaphanous (via CBD/FH3 domain). As to expression, expressed in hemocytes (at protein level).

The protein localises to the cell membrane. It is found in the cytoplasm. Its subcellular location is the cytoskeleton. It localises to the apical cell membrane. The protein resides in the lateral cell membrane. Its function is as follows. Has a role in regulating actin cytoskeletal organization: required during early development for proper execution of morphogenetic movements of individual cells and groups of cells important for the formation of the embryonic body plan. Plays a role in regulating dorsal closure during embryogenesis. During axis elongation, required for Rho-kinase Rok planar polarity and adherens junction localization as well as for generating a planar polarized distribution of the actin-binding protein Shrm. During embryogenesis, acts upstream of wash to regulate the developmental migration of tail hemocytes anteriorly along the ventral midline. May have a role in eye development. Involved in targeted recruitment of dia/diaphanous to apical membranes of polarized epithelial cells. In Drosophila melanogaster (Fruit fly), this protein is Ras-like GTP-binding protein Rho1.